The following is a 229-amino-acid chain: Meiotically up-regulated gene 31 protein (229 aa).

Disordered regions lie at residues 16 to 68 (EDSA…EEDK) and 189 to 229 (GLPE…TTWA).

Its subcellular location is the endoplasmic reticulum. In terms of biological role, has a role in meiosis. The chain is Meiotically up-regulated gene 31 protein (mug31) from Schizosaccharomyces pombe (strain 972 / ATCC 24843) (Fission yeast).